The primary structure comprises 542 residues: Cytochrome P450 734A6 (542 aa).

Residues glycine 2–leucine 22 form a helical membrane-spanning segment. Cysteine 474 provides a ligand contact to heme.

This sequence belongs to the cytochrome P450 family. Heme is required as a cofactor. In terms of tissue distribution, highly expressed in leaf sheaths. Expressed in roots, shoot apex, leaf blades, internodes and panicles.

Its subcellular location is the membrane. Its function is as follows. Cytochrome P450 involved in brassinosteroids (BRs) inactivation and regulation of BRs homeostasis. Is a multifunctional and multisubstrate enzyme that controls the endogenous bioactive BR content both by direct inactivation of castasterone (CS) and by decreasing the levels of BR precursors. Catalyzes the oxidation of carbon 22 hydroxylated BR intermediates to produce C26 oxidized metabolites. This Oryza sativa subsp. japonica (Rice) protein is Cytochrome P450 734A6 (CYP734A6).